Reading from the N-terminus, the 256-residue chain is MVSAVLDSRFNVALWIFQRHPKYDVVDALRRCQHRCWEFVDPHPPRMQRQLSSTNLSFHITDGCHPYPAVQADGSVSGGLEWSGADDGDCKGSAWGSQVYARSAWYNNKYAIMYAWYFPKGKGRQHVHKLHSGHRHEWEFAVVWVDQPSADHSNLLGVSMSFGPSFHKEAPVQPEHVVGSSIKLDSYSTFWGAKQGLRVTTDIGTTQDLIQWEQLTDAARASLTETNFDIDEAVVPVEMPLKDDVFQLKLNSTYPF.

A Conserved undecapeptide motif motif is present at residues 111 to 121 (AIMYAWYFPKG). The short motif at 133-139 (GHRHEWE) is the Conserved heptapeptide motif element.

It belongs to the Necrosis inducing protein (NPP1) family.

It localises to the secreted. In terms of biological role, secreted effector that acts as a pathogen-associated molecular pattern (PAMP) recognized by the plant immune system. The chain is Necrosis-inducing protein NPP1 from Phytophthora cinnamomi (Cinnamon fungus).